Consider the following 546-residue polypeptide: Chaperonin GroEL (546 aa).

Residues 30–33, lysine 51, 87–91, glycine 415, 479–481, and aspartate 495 contribute to the ATP site; these read TLGP, DGTTT, and NAA.

The protein belongs to the chaperonin (HSP60) family. Forms a cylinder of 14 subunits composed of two heptameric rings stacked back-to-back. Interacts with the co-chaperonin GroES.

The protein resides in the cytoplasm. It carries out the reaction ATP + H2O + a folded polypeptide = ADP + phosphate + an unfolded polypeptide.. Functionally, together with its co-chaperonin GroES, plays an essential role in assisting protein folding. The GroEL-GroES system forms a nano-cage that allows encapsulation of the non-native substrate proteins and provides a physical environment optimized to promote and accelerate protein folding. The protein is Chaperonin GroEL of Pseudomonas putida (strain ATCC 47054 / DSM 6125 / CFBP 8728 / NCIMB 11950 / KT2440).